A 650-amino-acid chain; its full sequence is Chaperone protein HtpG (650 aa).

Residues 1–349 (MTKTTKKFET…SSDLPLNVSR (349 aa)) form an a; substrate-binding region. Residues 350-566 (EILQEDVQIK…EHGLNANMER (217 aa)) form a b region. The interval 567–650 (ILRAMNQDVP…VADGKAAAGE (84 aa)) is c.

It belongs to the heat shock protein 90 family. Homodimer.

The protein resides in the cytoplasm. Molecular chaperone. Has ATPase activity. This Geobacter metallireducens (strain ATCC 53774 / DSM 7210 / GS-15) protein is Chaperone protein HtpG.